The chain runs to 419 residues: Homeobox-containing protein 1 (419 aa).

One can recognise an HNF-p1 domain in the interval 18 to 49 (DEPRFTIEQIDLLQRLRRTGMTKHEILHALET). Positions 56–152 (EHSDKFGRRS…GQRSYSFEAS (97 aa)) are disordered. Residue K60 forms a Glycyl lysine isopeptide (Lys-Gly) (interchain with G-Cter in SUMO2) linkage. Low complexity-rich tracts occupy residues 64–73 (RSSYGGSSYG) and 81–93 (ASSSTATASTQTQ). The span at 94–132 (HSGMSPSPSNSYDTSPLPCTTNQNGRENNDRLSTSNGKM) shows a compositional bias: polar residues. Residue K131 forms a Glycyl lysine isopeptide (Lys-Gly) (interchain with G-Cter in SUMO2) linkage. A POU-specific atypical domain is found at 145-241 (RSYSFEASEE…PGATLSMRPA (97 aa)). Phosphoserine is present on S148. A Glycyl lysine isopeptide (Lys-Gly) (interchain with G-Cter in SUMO2) cross-link involves residue K161. Residue S170 is modified to Phosphoserine. Glycyl lysine isopeptide (Lys-Gly) (interchain with G-Cter in SUMO2) cross-links involve residues K174, K217, and K310. Residues 267–341 (RRGSRFTWRK…NRRKEIKRRA (75 aa)) constitute a DNA-binding region (homeobox). The tract at residues 352-384 (IDVQSPGGHSNSDDVDGNDYSEQDDSTSHSDHQ) is disordered. The span at 364–376 (DDVDGNDYSEQDD) shows a compositional bias: acidic residues. Residue K412 forms a Glycyl lysine isopeptide (Lys-Gly) (interchain with G-Cter in SUMO1); alternate linkage. K412 participates in a covalent cross-link: Glycyl lysine isopeptide (Lys-Gly) (interchain with G-Cter in SUMO2); alternate.

As to quaternary structure, associates with the telomerase holoenzyme complex. Interacts with DKC1, XRCC6 and COIL.

Its subcellular location is the nucleus. The protein localises to the cytoplasm. It localises to the chromosome. The protein resides in the telomere. It is found in the cajal body. Its subcellular location is the PML body. In terms of biological role, binds directly to 5'-TTAGGG-3' repeats in telomeric DNA. Associates with the telomerase complex at sites of active telomere processing and positively regulates telomere elongation. Important for TERT binding to chromatin, indicating a role in recruitment of the telomerase complex to telomeres. Also plays a role in the alternative lengthening of telomeres (ALT) pathway in telomerase-negative cells where it promotes formation and/or maintenance of ALT-associated promyelocytic leukemia bodies (APBs). Enhances formation of telomere C-circles in ALT cells, suggesting a possible role in telomere recombination. Might also be involved in the DNA damage response at telomeres. This is Homeobox-containing protein 1 (Hmbox1) from Mus musculus (Mouse).